The chain runs to 383 residues: Outer membrane protein Omp-EA (383 aa).

Residues 1–21 (MKRNILAVLIPALLAAGAANA) form the signal peptide. The Periplasmic portion of the chain corresponds to 22-30 (AEIYNKDGN). Residues 31 to 45 (KLDLYGKVKAMRYLS) traverse the membrane as a beta stranded segment. Topologically, residues 46–58 (DADSNASNNADKS) are extracellular. Residues 59-70 (YTRIGFKGQTLI) traverse the membrane as a beta stranded segment. Residues 71–74 (NDQL) lie on the Periplasmic side of the membrane. A beta stranded transmembrane segment spans residues 75–86 (TGYGQWEYNFSL). Residues 87-100 (SNSESSSDAQSGNK) are Extracellular-facing. The beta stranded transmembrane segment at 101–109 (TRLGFAGLK) threads the bilayer. Residues 110–112 (LKD) are Periplasmic-facing. The chain crosses the membrane as a beta stranded span at residues 113–122 (YGSVDYGRNY). The Extracellular portion of the chain corresponds to 123-155 (GVIYDVEAFTDMMPEFGATGYTRTDTYMLTRGN). The chain crosses the membrane as a beta stranded span at residues 156 to 164 (SMLTWRNSD). At 165–171 (FFGLVDG) the chain is on the periplasmic side. A beta stranded membrane pass occupies residues 172-178 (LKIALQY). Topologically, residues 179-198 (QGKNEGSGTRATNVSNGDGY) are extracellular. The chain crosses the membrane as a beta stranded span at residues 199–206 (GASLSYKI). Residues 207–209 (VEG) are Periplasmic-facing. A beta stranded transmembrane segment spans residues 210–219 (LTINGAMSSS). Residues 220-243 (NRLNANSASSTTSQKMAAYGSGGR) are Extracellular-facing. Residues 244 to 252 (AEAWATGLK) traverse the membrane as a beta stranded segment. Residues 253 to 258 (YDANGV) are Periplasmic-facing. The chain crosses the membrane as a beta stranded span at residues 259–268 (YLAGTYAETR). At 269-296 (NTNPFSGASYTFAGNSTATAVSGYANKV) the chain is on the extracellular side. A beta stranded membrane pass occupies residues 297 to 307 (QNTELVAQYQF). Residues 308 to 310 (DSG) lie on the Periplasmic side of the membrane. The chain crosses the membrane as a beta stranded span at residues 311-319 (LRPSLAYVQ). Residues 320–335 (TKAKDIENGIGDADLS) are Extracellular-facing. A beta stranded transmembrane segment spans residues 336-346 (KFVDVAATYYF). Over 347–351 (NKNMS) the chain is Periplasmic. Residues 352 to 361 (AFVDYKVNLL) traverse the membrane as a beta stranded segment. Residues 362-372 (SDSNKLHLNTD) lie on the Extracellular side of the membrane. Residues 373–383 (DIVAVGLVYQF) form a beta stranded membrane-spanning segment.

It belongs to the Gram-negative porin family. In terms of assembly, homotrimer.

The protein resides in the cell outer membrane. Functionally, may play an important role in maintaining pathogenicity in plants. This chain is Outer membrane protein Omp-EA (omp-EA), found in Erwinia amylovora (Fire blight bacteria).